The following is a 292-amino-acid chain: Homoserine kinase (292 aa).

84–94 contributes to the ATP binding site; the sequence is PLSRGLGSSSA.

This sequence belongs to the GHMP kinase family. Homoserine kinase subfamily.

Its subcellular location is the cytoplasm. The catalysed reaction is L-homoserine + ATP = O-phospho-L-homoserine + ADP + H(+). Its pathway is amino-acid biosynthesis; L-threonine biosynthesis; L-threonine from L-aspartate: step 4/5. In terms of biological role, catalyzes the ATP-dependent phosphorylation of L-homoserine to L-homoserine phosphate. The sequence is that of Homoserine kinase from Campylobacter jejuni subsp. doylei (strain ATCC BAA-1458 / RM4099 / 269.97).